The primary structure comprises 101 residues: NAD(P)H-quinone oxidoreductase subunit 4L, chloroplastic (101 aa).

3 consecutive transmembrane segments (helical) span residues 2–22 (ILEH…YGLI), 32–52 (MCLE…SDFF), and 61–81 (IFSI…LAIV).

This sequence belongs to the complex I subunit 4L family. In terms of assembly, NDH is composed of at least 16 different subunits, 5 of which are encoded in the nucleus.

It is found in the plastid. The protein resides in the chloroplast thylakoid membrane. It catalyses the reaction a plastoquinone + NADH + (n+1) H(+)(in) = a plastoquinol + NAD(+) + n H(+)(out). The catalysed reaction is a plastoquinone + NADPH + (n+1) H(+)(in) = a plastoquinol + NADP(+) + n H(+)(out). Functionally, NDH shuttles electrons from NAD(P)H:plastoquinone, via FMN and iron-sulfur (Fe-S) centers, to quinones in the photosynthetic chain and possibly in a chloroplast respiratory chain. The immediate electron acceptor for the enzyme in this species is believed to be plastoquinone. Couples the redox reaction to proton translocation, and thus conserves the redox energy in a proton gradient. The chain is NAD(P)H-quinone oxidoreductase subunit 4L, chloroplastic from Eucalyptus globulus subsp. globulus (Tasmanian blue gum).